A 356-amino-acid polypeptide reads, in one-letter code: MTKIAFTGGGTVGHVSVNLSLIPTALSQGYEVLYIGSKNGIEREMIESQLPEIKYYPISSGKLRRYISLENAKDVFKVLKGILDARKVLKKEKPDLLFSKGGFVSVPVVIAAKSLNIPTIIHESDLTPGLANKIALKFAKKIYTTFEETLNYLPKEKADFIGATIREDLKNGNAHNGYQLTGFNENKKVLLVMGGSLGSKKLNSIIRENLDALLQQYQVIHLTGKGLKDAQVKKSGYIQYEFVKEDLTDLLAITDTVISRAGSNAIYEFLTLRIPMLLVPLGLDQSRGDQIDNANHFADKGYAKTIDEEQLTAQILLQELNKMEQERTRIINNMKSYEQSYTKEALFDKMIKDALN.

Positions 166, 196, and 290 each coordinate UDP-N-acetyl-alpha-D-glucosamine.

Belongs to the glycosyltransferase 28 family. MurG subfamily.

It localises to the cell membrane. The enzyme catalyses Mur2Ac(oyl-L-Ala-gamma-D-Glu-L-Lys-D-Ala-D-Ala)-di-trans,octa-cis-undecaprenyl diphosphate + UDP-N-acetyl-alpha-D-glucosamine = beta-D-GlcNAc-(1-&gt;4)-Mur2Ac(oyl-L-Ala-gamma-D-Glu-L-Lys-D-Ala-D-Ala)-di-trans,octa-cis-undecaprenyl diphosphate + UDP + H(+). Its pathway is cell wall biogenesis; peptidoglycan biosynthesis. Functionally, cell wall formation. Catalyzes the transfer of a GlcNAc subunit on undecaprenyl-pyrophosphoryl-MurNAc-pentapeptide (lipid intermediate I) to form undecaprenyl-pyrophosphoryl-MurNAc-(pentapeptide)GlcNAc (lipid intermediate II). The polypeptide is UDP-N-acetylglucosamine--N-acetylmuramyl-(pentapeptide) pyrophosphoryl-undecaprenol N-acetylglucosamine transferase (Staphylococcus aureus (strain MRSA252)).